The sequence spans 1805 residues: Kinesin-like protein KIF13A (1805 aa).

One can recognise a Kinesin motor domain in the interval 5-352; that stretch reads KVKVAVRVRP…LRYADRAKRI (348 aa). 102–109 is an ATP binding site; sequence GQTGSGKS. A coiled-coil region spans residues 359 to 436; that stretch reads NEDPNAKVIR…QLESMGISLE (78 aa). The 51-residue stretch at 469-519 folds into the FHA domain; it reads HTRVGADTSQDIQLFGIGIQPQHCEIDIASDGDVTLTPKENARSCVNGTLV. Positions 556–567 are enriched in basic and acidic residues; sequence EKETGPPEHDLD. 2 disordered regions span residues 556-575 and 633-656; these read EKET…ASSE and QQLS…SQTA. Coiled-coil stretches lie at residues 602 to 775 and 1100 to 1138; these read VQVL…LYGK and DALI…EQWV. The residue at position 636 (Ser636) is a Phosphoserine. A Phosphoserine modification is found at Ser1287. Polar residues predominate over residues 1385-1396; sequence TPNVHNVSSSRP. The interval 1385 to 1404 is disordered; that stretch reads TPNVHNVSSSRPDLSGFDED. Phosphoserine is present on residues Ser1454, Ile1481, Ser1490, and Met1494. A disordered region spans residues 1507–1531; it reads PSGSNGSSMPVEHNSKREKKIDSEE. Positions 1518–1547 form a coiled coil; that stretch reads EHNSKREKKIDSEEEENELEAINRKLISSQ. Residues 1519 to 1528 show a composition bias toward basic and acidic residues; sequence HNSKREKKID. 2 positions are modified to phosphoserine: Ser1529 and Ser1572. Positions 1612–1621 are enriched in low complexity; it reads MVVPSSDSSD. Positions 1612 to 1645 are disordered; it reads MVVPSSDSSDQLAIQTKDADSTEHSTPSLVHDFR. 2 positions are modified to phosphoserine: Ser1648 and Ser1698. A disordered region spans residues 1749–1779; that stretch reads GLTDSSAGELSSRRSLPNKTGGKTVSDGLHH. Residues 1751–1771 show a composition bias toward polar residues; it reads TDSSAGELSSRRSLPNKTGGK.

The protein belongs to the TRAFAC class myosin-kinesin ATPase superfamily. Kinesin family. In terms of assembly, interacts with AP2B1. Interacts with ZFYVE26. Interacts with AP1G1 and AP1G2. In terms of tissue distribution, widely expressed, with highest levels in heart, brain and skeletal muscle.

The protein resides in the cytoplasm. Its subcellular location is the cytoskeleton. It localises to the microtubule organizing center. It is found in the centrosome. The protein localises to the midbody. The protein resides in the endosome membrane. Its subcellular location is the golgi apparatus membrane. Plus end-directed microtubule-dependent motor protein involved in intracellular transport and regulating various processes such as mannose-6-phosphate receptor (M6PR) transport to the plasma membrane, endosomal sorting during melanosome biogenesis and cytokinesis. Mediates the transport of M6PR-containing vesicles from trans-Golgi network to the plasma membrane via direct interaction with the AP-1 complex. During melanosome maturation, required for delivering melanogenic enzymes from recycling endosomes to nascent melanosomes by creating peripheral recycling endosomal subdomains in melanocytes. Also required for the abscission step in cytokinesis: mediates translocation of ZFYVE26, and possibly TTC19, to the midbody during cytokinesis. This chain is Kinesin-like protein KIF13A (KIF13A), found in Homo sapiens (Human).